Consider the following 90-residue polypeptide: MNYFAVLCIFSCICLWQFSDAAPFISVQSSSQSRSQKVMNGMLRTLYDYSVQDSVNDATGHLIHTHKSNFNSDVMSPEEIERVRQQLNMA.

An N-terminal signal peptide occupies residues 1–21 (MNYFAVLCIFSCICLWQFSDA).

As to expression, main cells of the accessory glands of males.

Its subcellular location is the secreted. The protein localises to the extracellular space. Functionally, this protein is transferred from male to female during mating and may affect egglaying and behavior after mating. The protein is Accessory gland-specific peptide 26Ab (Acp26Ab) of Drosophila sechellia (Fruit fly).